Reading from the N-terminus, the 416-residue chain is Serine hydroxymethyltransferase (416 aa).

(6S)-5,6,7,8-tetrahydrofolate is bound by residues Leu121 and 125–127 (GHL). Lys229 is subject to N6-(pyridoxal phosphate)lysine.

The protein belongs to the SHMT family. In terms of assembly, homodimer. Pyridoxal 5'-phosphate is required as a cofactor.

The protein resides in the cytoplasm. It catalyses the reaction (6R)-5,10-methylene-5,6,7,8-tetrahydrofolate + glycine + H2O = (6S)-5,6,7,8-tetrahydrofolate + L-serine. Its pathway is one-carbon metabolism; tetrahydrofolate interconversion. It participates in amino-acid biosynthesis; glycine biosynthesis; glycine from L-serine: step 1/1. Its function is as follows. Catalyzes the reversible interconversion of serine and glycine with tetrahydrofolate (THF) serving as the one-carbon carrier. This reaction serves as the major source of one-carbon groups required for the biosynthesis of purines, thymidylate, methionine, and other important biomolecules. Also exhibits THF-independent aldolase activity toward beta-hydroxyamino acids, producing glycine and aldehydes, via a retro-aldol mechanism. This is Serine hydroxymethyltransferase from Neisseria gonorrhoeae (strain NCCP11945).